The sequence spans 295 residues: UDP-N-acetylenolpyruvoylglucosamine reductase (295 aa).

The FAD-binding PCMH-type domain maps to 23 to 188 (KVGGPADFLA…ISAKFALKPG (166 aa)). Residue R167 is part of the active site. Residue S217 is the Proton donor of the active site. E287 is an active-site residue.

It belongs to the MurB family. The cofactor is FAD.

Its subcellular location is the cytoplasm. The catalysed reaction is UDP-N-acetyl-alpha-D-muramate + NADP(+) = UDP-N-acetyl-3-O-(1-carboxyvinyl)-alpha-D-glucosamine + NADPH + H(+). The protein operates within cell wall biogenesis; peptidoglycan biosynthesis. Functionally, cell wall formation. This chain is UDP-N-acetylenolpyruvoylglucosamine reductase, found in Streptococcus pyogenes serotype M12 (strain MGAS9429).